A 941-amino-acid chain; its full sequence is Protein translocase subunit SecA (941 aa).

Residues glutamine 87, glycine 105–threonine 109, and aspartate 524 contribute to the ATP site. The disordered stretch occupies residues aspartate 871–valine 919. Zn(2+) is bound by residues cysteine 925, cysteine 927, cysteine 936, and histidine 937.

Belongs to the SecA family. As to quaternary structure, monomer and homodimer. Part of the essential Sec protein translocation apparatus which comprises SecA, SecYEG and auxiliary proteins SecDF-YajC and YidC. Zn(2+) serves as cofactor.

It localises to the cell inner membrane. Its subcellular location is the cytoplasm. It carries out the reaction ATP + H2O + cellular proteinSide 1 = ADP + phosphate + cellular proteinSide 2.. Functionally, part of the Sec protein translocase complex. Interacts with the SecYEG preprotein conducting channel. Has a central role in coupling the hydrolysis of ATP to the transfer of proteins into and across the cell membrane, serving both as a receptor for the preprotein-SecB complex and as an ATP-driven molecular motor driving the stepwise translocation of polypeptide chains across the membrane. The chain is Protein translocase subunit SecA from Afipia carboxidovorans (strain ATCC 49405 / DSM 1227 / KCTC 32145 / OM5) (Oligotropha carboxidovorans).